The following is a 380-amino-acid chain: Cytochrome b (380 aa).

The next 4 membrane-spanning stretches (helical) occupy residues 33–53 (FGSLLGLCLITQILTGLFLAM), 77–98 (WLIRNIHANGASFFFICIYLHI), 113–133 (WNVGVILLLLVMMTAFVGYVL), and 178–198 (FFAFHFLFPFVIAAATVIHLI). Heme b contacts are provided by H83 and H97. H182 and H196 together coordinate heme b. H201 is an a ubiquinone binding site. 4 helical membrane passes run 226 to 246 (YKDLLGFAALLIALAALALFS), 288 to 308 (LGGVLALLFSILILMLVPILH), 320 to 340 (FSQFLFWSLVADVMILTWIGG), and 347 to 367 (FVIIGQVASFLYFFLFLVMIP).

The protein belongs to the cytochrome b family. The cytochrome bc1 complex contains 3 respiratory subunits (MT-CYB, CYC1 and UQCRFS1), 2 core proteins (UQCRC1 and UQCRC2) and probably 6 low-molecular weight proteins. Requires heme b as cofactor.

The protein resides in the mitochondrion inner membrane. Functionally, component of the ubiquinol-cytochrome c reductase complex (complex III or cytochrome b-c1 complex) that is part of the mitochondrial respiratory chain. The b-c1 complex mediates electron transfer from ubiquinol to cytochrome c. Contributes to the generation of a proton gradient across the mitochondrial membrane that is then used for ATP synthesis. The protein is Cytochrome b (mt-cyb) of Paralichthys olivaceus (Bastard halibut).